The chain runs to 366 residues: GTP cyclohydrolase 1 type 2 homolog (366 aa).

A divalent metal cation-binding residues include histidine 64, histidine 65, aspartate 102, histidine 326, and glutamate 329.

Belongs to the GTP cyclohydrolase I type 2/NIF3 family. Homohexamer.

The protein is GTP cyclohydrolase 1 type 2 homolog of Staphylococcus epidermidis (strain ATCC 35984 / DSM 28319 / BCRC 17069 / CCUG 31568 / BM 3577 / RP62A).